The chain runs to 555 residues: Connector enhancer of kinase suppressor of ras 3 (555 aa).

In terms of domain architecture, SAM spans 7-72; sequence WSPKQVVDWT…LEAVDLLCAL (66 aa). The CRIC domain occupies 80–174; sequence TMKNLVLKLR…TAVQKDCLIA (95 aa). The PDZ domain maps to 211-293; sequence EVHLPNVRPG…GVVLLLKKRP (83 aa). Disordered stretches follow at residues 308–333, 362–389, and 518–538; these read RWKPPLVQTSPPPTTTQSPESTMDAS, SFGYRGHSKSKQPLPVRKGSESPNSFLD, and PFQEEGSKKKSASSSAKASSG. A compositionally biased stretch (low complexity) spans 311–329; it reads PPLVQTSPPPTTTQSPEST. A DUF1170 domain is found at 325 to 546; the sequence is SPESTMDASL…SGEPSLLVSW (222 aa). Residues Ser-381 and Ser-383 each carry the phosphoserine modification.

This sequence belongs to the CNKSR family. In terms of assembly, interacts with epithelial sodium channel ENaC. Interacts directly with SCNN1A (ENaC subunit alpha) and SCNN1B (ENaC subunit beta) C-terminal tails. Interacts with ENaC regulatory proteins NEDD4L, RAF1 and SGK1. As to expression, expressed in kidney.

The protein localises to the cytoplasm. Its subcellular location is the apical cell membrane. In terms of biological role, involved in transepithelial sodium transport. Regulates aldosterone-induced and epithelial sodium channel (ENaC)-mediated sodium transport through regulation of ENaC cell surface expression. Acts as a scaffold protein coordinating the assembly of an ENaC-regulatory complex (ERC). In Mus musculus (Mouse), this protein is Connector enhancer of kinase suppressor of ras 3 (Cnksr3).